Reading from the N-terminus, the 323-residue chain is NADH-ubiquinone oxidoreductase chain 1 (323 aa).

The next 8 membrane-spanning stretches (helical) occupy residues 8 to 28 (LLNPLAVIIPILLAVAFLTLI), 74 to 94 (LLFITTPMLALTMALTLWLPL), 105 to 125 (LGMLFILAISSLTVYSILGSG), 150 to 170 (SLGLILLAMIIFAGGFTLTTF), 176 to 196 (TIWLLTPGWPLAAMWYISTLA), 227 to 247 (LFFLAEYANILLMNTLSTILF), 258 to 278 (ELTSINLMIKASALSMLFLWV), and 298 to 318 (FLPITLAMILWHTSLPIFTGS).

It belongs to the complex I subunit 1 family.

The protein localises to the mitochondrion inner membrane. It carries out the reaction a ubiquinone + NADH + 5 H(+)(in) = a ubiquinol + NAD(+) + 4 H(+)(out). Its function is as follows. Core subunit of the mitochondrial membrane respiratory chain NADH dehydrogenase (Complex I) that is believed to belong to the minimal assembly required for catalysis. Complex I functions in the transfer of electrons from NADH to the respiratory chain. The immediate electron acceptor for the enzyme is believed to be ubiquinone. The polypeptide is NADH-ubiquinone oxidoreductase chain 1 (MT-ND1) (Latimeria chalumnae (Coelacanth)).